We begin with the raw amino-acid sequence, 448 residues long: Hydroxycinnamoyl-CoA:piscidic acid hydroxycinnamoyltransferase (448 aa).

Active-site proton acceptor residues include His153 and Asp395.

The protein belongs to the plant acyltransferase family. As to expression, highly expressed in root and rhizome. Expressed in senescent leaf and callus tissues. Expressed in detached leaf treated for 18 hours with ethephon, methyl jasmonate, salicylic acid or illuminated for 24 hours with UV light. Not expressed in mature leaf. Expressed at low levels in leaves and flowers.

The catalysed reaction is (2R,3S)-piscidate + (E)-4-coumaroyl-CoA = cimicifugate K + CoA. It carries out the reaction (2R,3S)-piscidate + (E)-caffeoyl-CoA = cimicifugate D + CoA. The enzyme catalyses (2R,3S)-piscidate + (E)-sinapoyl-CoA = cimicifugate J + CoA. It catalyses the reaction (2R,3S)-piscidate + (E)-feruloyl-CoA = cimicifugate E + CoA. Its pathway is phenylpropanoid metabolism. Functionally, catalyzes the formation of cimicifugic acids. Uses hydroxycinnamoyl-CoA thioesters as hydroxycinnamoyl donor substrates. Has a strict specificity for piscidic acid as an acceptor substrate as none of the various other acceptors tested including 4-hydroxyphenyllactic acid, malate, spermidine or tetrahydroxyhexanedioic acid are substrates. Donor substrates include 4-coumaroyl-CoA, caffeoyl-CoA, sinapoyl-CoA and feruloyl-CoA. No activity with cinnamoyl-CoA, isoferuloyl-CoA, 3,4-dimethoxycinnamoyl-CoA or 3,4-dihydroxybenzoyl-CoA as donors. In the reverse reaction with fukinolic acid and CoA as substrates, a formation of fukiic acid is evident. Hence, fukiic acid may also serve as an acceptor substrate. Involved in the biosynthesis of cimicifugic and possibly fukinolic acids. This is Hydroxycinnamoyl-CoA:piscidic acid hydroxycinnamoyltransferase from Actaea racemosa (Black cohosh).